We begin with the raw amino-acid sequence, 240 residues long: Small ribosomal subunit protein uS3m (240 aa).

This sequence belongs to the universal ribosomal protein uS3 family.

It is found in the mitochondrion. The chain is Small ribosomal subunit protein uS3m (RPS3) from Chondrus crispus (Carrageen Irish moss).